The chain runs to 309 residues: Chronophin (309 aa).

Catalysis depends on aspartate 25, which acts as the Nucleophile. Aspartate 25 and aspartate 27 together coordinate Mg(2+). Aspartate 27 (proton donor) is an active-site residue. Substrate contacts are provided by residues 58–60 (SNN), histidine 178, and lysine 209. Aspartate 234 contributes to the Mg(2+) binding site.

The protein belongs to the HAD-like hydrolase superfamily. As to quaternary structure, homodimer. Mg(2+) serves as cofactor.

The protein resides in the cytoplasm. The protein localises to the cytosol. Its subcellular location is the cytoskeleton. It is found in the cell projection. It localises to the ruffle membrane. The protein resides in the lamellipodium membrane. The protein localises to the cell membrane. The catalysed reaction is pyridoxal 5'-phosphate + H2O = pyridoxal + phosphate. It carries out the reaction pyridoxine 5'-phosphate + H2O = pyridoxine + phosphate. It catalyses the reaction pyridoxamine + phosphate = pyridoxamine 5'-phosphate + H2O. The enzyme catalyses O-phospho-L-seryl-[protein] + H2O = L-seryl-[protein] + phosphate. In terms of biological role, functions as a pyridoxal phosphate (PLP) phosphatase, which also catalyzes the dephosphorylation of pyridoxine 5'-phosphate (PNP) and pyridoxamine 5'-phosphate (PMP), with order of substrate preference PLP &gt; PNP &gt; PMP and therefore plays a role in vitamin B6 metabolism. Also functions as a protein serine phosphatase that specifically dephosphorylates 'Ser-3' in proteins of the actin-depolymerizing factor (ADF)/cofilin family like CFL1 and DSTN. Thereby, regulates cofilin-dependent actin cytoskeleton reorganization, being required for normal progress through mitosis and normal cytokinesis. Does not dephosphorylate phosphothreonines in LIMK1. Does not dephosphorylate peptides containing phosphotyrosine. This Rattus norvegicus (Rat) protein is Chronophin.